Here is an 81-residue protein sequence, read N- to C-terminus: Large ribosomal subunit protein bL31B (81 aa).

It belongs to the bacterial ribosomal protein bL31 family. Type B subfamily. In terms of assembly, part of the 50S ribosomal subunit.

This chain is Large ribosomal subunit protein bL31B, found in Lactobacillus acidophilus (strain ATCC 700396 / NCK56 / N2 / NCFM).